Reading from the N-terminus, the 303-residue chain is Diaminopimelate epimerase (303 aa).

Asn-15, Gln-47, and Asn-67 together coordinate substrate. The Proton donor role is filled by Cys-76. Substrate-binding positions include 77-78, Asn-163, Asn-197, and 215-216; these read GN and ER. The active-site Proton acceptor is Cys-224. A substrate-binding site is contributed by 225 to 226; the sequence is GS. Residues 278–303 are disordered; sequence FDPATGEWSRDTQGLQGSGNADRGAA.

The protein belongs to the diaminopimelate epimerase family. Homodimer.

Its subcellular location is the cytoplasm. The enzyme catalyses (2S,6S)-2,6-diaminopimelate = meso-2,6-diaminopimelate. Its pathway is amino-acid biosynthesis; L-lysine biosynthesis via DAP pathway; DL-2,6-diaminopimelate from LL-2,6-diaminopimelate: step 1/1. In terms of biological role, catalyzes the stereoinversion of LL-2,6-diaminopimelate (L,L-DAP) to meso-diaminopimelate (meso-DAP), a precursor of L-lysine and an essential component of the bacterial peptidoglycan. This chain is Diaminopimelate epimerase, found in Brucella abortus (strain S19).